Reading from the N-terminus, the 341-residue chain is tRNA N6-adenosine threonylcarbamoyltransferase (341 aa).

2 residues coordinate Fe cation: His115 and His119. Substrate contacts are provided by residues 138–142, Asp171, Gly184, Asp188, and Asn279; that span reads VVSGG. Residue Asp307 coordinates Fe cation.

Belongs to the KAE1 / TsaD family. The cofactor is Fe(2+).

It localises to the cytoplasm. It carries out the reaction L-threonylcarbamoyladenylate + adenosine(37) in tRNA = N(6)-L-threonylcarbamoyladenosine(37) in tRNA + AMP + H(+). Functionally, required for the formation of a threonylcarbamoyl group on adenosine at position 37 (t(6)A37) in tRNAs that read codons beginning with adenine. Is involved in the transfer of the threonylcarbamoyl moiety of threonylcarbamoyl-AMP (TC-AMP) to the N6 group of A37, together with TsaE and TsaB. TsaD likely plays a direct catalytic role in this reaction. This chain is tRNA N6-adenosine threonylcarbamoyltransferase, found in Clostridium novyi (strain NT).